The chain runs to 595 residues: Methionine--tRNA ligase (595 aa).

The 'HIGH' region signature appears at 11-21; it reads PYANGPRHIGH. The Zn(2+) site is built by cysteine 143, cysteine 146, cysteine 156, and cysteine 159. The short motif at 350-354 is the 'KMSKS' region element; it reads KFSSS. Position 353 (serine 353) interacts with ATP.

Belongs to the class-I aminoacyl-tRNA synthetase family. MetG type 1 subfamily. As to quaternary structure, monomer. The cofactor is Zn(2+).

The protein resides in the cytoplasm. It carries out the reaction tRNA(Met) + L-methionine + ATP = L-methionyl-tRNA(Met) + AMP + diphosphate. Its function is as follows. Is required not only for elongation of protein synthesis but also for the initiation of all mRNA translation through initiator tRNA(fMet) aminoacylation. This is Methionine--tRNA ligase from Nocardioides sp. (strain ATCC BAA-499 / JS614).